The primary structure comprises 130 residues: Small ribosomal subunit protein uS11 (130 aa).

Belongs to the universal ribosomal protein uS11 family. In terms of assembly, part of the 30S ribosomal subunit. Interacts with proteins S7 and S18. Binds to IF-3.

Functionally, located on the platform of the 30S subunit, it bridges several disparate RNA helices of the 16S rRNA. Forms part of the Shine-Dalgarno cleft in the 70S ribosome. The sequence is that of Small ribosomal subunit protein uS11 from Lactobacillus helveticus (strain DPC 4571).